Reading from the N-terminus, the 100-residue chain is Small ribosomal subunit protein uS17 (100 aa).

It belongs to the universal ribosomal protein uS17 family. As to quaternary structure, part of the 30S ribosomal subunit.

Its function is as follows. One of the primary rRNA binding proteins, it binds specifically to the 5'-end of 16S ribosomal RNA. This chain is Small ribosomal subunit protein uS17, found in Fervidobacterium nodosum (strain ATCC 35602 / DSM 5306 / Rt17-B1).